The following is a 181-amino-acid chain: Large ribosomal subunit protein uL6 (181 aa).

The protein belongs to the universal ribosomal protein uL6 family. In terms of assembly, part of the 50S ribosomal subunit.

This protein binds to the 23S rRNA, and is important in its secondary structure. It is located near the subunit interface in the base of the L7/L12 stalk, and near the tRNA binding site of the peptidyltransferase center. This is Large ribosomal subunit protein uL6 from Coprothermobacter proteolyticus (strain ATCC 35245 / DSM 5265 / OCM 4 / BT).